Here is a 314-residue protein sequence, read N- to C-terminus: Ribosomal protein L11 methyltransferase (314 aa).

4 residues coordinate S-adenosyl-L-methionine: T161, G182, D204, and N248.

Belongs to the methyltransferase superfamily. PrmA family.

It localises to the cytoplasm. It catalyses the reaction L-lysyl-[protein] + 3 S-adenosyl-L-methionine = N(6),N(6),N(6)-trimethyl-L-lysyl-[protein] + 3 S-adenosyl-L-homocysteine + 3 H(+). Its function is as follows. Methylates ribosomal protein L11. The chain is Ribosomal protein L11 methyltransferase from Listeria monocytogenes serotype 4b (strain CLIP80459).